Here is a 151-residue protein sequence, read N- to C-terminus: Spore coat polysaccharide biosynthesis protein SpsL (151 aa).

This sequence to dTDP-4-dehydrorhamnose reductase.

The protein operates within spore coat biogenesis; spore coat polysaccharide biosynthesis. The protein is Spore coat polysaccharide biosynthesis protein SpsL (spsL) of Bacillus subtilis (strain 168).